Here is a 296-residue protein sequence, read N- to C-terminus: LysM and putative peptidoglycan-binding domain-containing protein 4 (296 aa).

The Extracellular portion of the chain corresponds to 1 to 217 (MRHKELLSKT…PMDGADCGIQ (217 aa)). A glycan (N-linked (GlcNAc...) asparagine) is linked at Asn30. Positions 74–118 (LQRELAQEDSLNKLALQYGCKVADIKKVNNFIREQDLYALKSIKS) constitute a LysM domain. A helical transmembrane segment spans residues 218–238 (WWNAVFIMLLIGIVLPIFYLV). Over 239 to 296 (YFKIQASGETPNSLNTAAIPNGSMAMGTVPGQAPRLAVAVPTVPSADSQFSQTTQAGN) the chain is Cytoplasmic.

Its subcellular location is the membrane. In Pongo abelii (Sumatran orangutan), this protein is LysM and putative peptidoglycan-binding domain-containing protein 4 (LYSMD4).